Consider the following 65-residue polypeptide: White colony protein WHS11 (65 aa).

Positions 1-17 are enriched in basic and acidic residues; sequence MSDLGRKDIGDKIESKL. The disordered stretch occupies residues 1-32; the sequence is MSDLGRKDIGDKIESKLTPDSQKSTPEQFKDK. The span at 18 to 27 shows a compositional bias: polar residues; it reads TPDSQKSTPE.

This sequence to yeast HSP12/GLP1 and S.pombe hsp9.

This chain is White colony protein WHS11 (WHS11), found in Candida albicans (strain WO-1) (Yeast).